The sequence spans 276 residues: Large ribosomal subunit protein uL2 (276 aa).

2 disordered regions span residues 36-55 and 219-276; these read PLPR…RHRG and TVRG…GRKK. Residues 255–276 are compositionally biased toward basic residues; it reads LGKKTRKKKNRSNKLIVRGRKK.

This sequence belongs to the universal ribosomal protein uL2 family. As to quaternary structure, part of the 50S ribosomal subunit. Forms a bridge to the 30S subunit in the 70S ribosome.

One of the primary rRNA binding proteins. Required for association of the 30S and 50S subunits to form the 70S ribosome, for tRNA binding and peptide bond formation. It has been suggested to have peptidyltransferase activity; this is somewhat controversial. Makes several contacts with the 16S rRNA in the 70S ribosome. In Macrococcus caseolyticus (strain JCSC5402) (Macrococcoides caseolyticum), this protein is Large ribosomal subunit protein uL2.